A 148-amino-acid chain; its full sequence is Protein E6 (148 aa).

2 zinc fingers span residues 29-65 and 102-138; these read CVFC…CARC and CYMC…CLYC.

The protein belongs to the papillomaviridae E6 protein family. As to quaternary structure, forms homodimers. Interacts with ubiquitin-protein ligase UBE3A/E6-AP; this interaction stimulates UBE3A ubiquitin activity. Interacts with host TP53 and EP300; this interaction inhibits TP53 activity.

It is found in the host cytoplasm. Its subcellular location is the host nucleus. Plays a major role in the induction and maintenance of cellular transformation. E6 associates with host UBE3A/E6-AP ubiquitin-protein ligase and modulates its activity. Sequesters tumor suppressor TP53 in the host cytoplasm and modulates its activity by interacting with host EP300 that results in the reduction of TP53 acetylation and activation. In turn, apoptosis induced by DNA damage is inhibited. E6 also protects host keratinocytes from apoptosis by mediating the degradation of host BAK1. May also inhibit host immune response. In Homo sapiens (Human), this protein is Protein E6.